The primary structure comprises 315 residues: tRNA dimethylallyltransferase (315 aa).

10 to 17 lines the ATP pocket; the sequence is GPTASGKS. 12-17 is a substrate binding site; sequence TASGKS. Positions 35-38 are interaction with substrate tRNA; it reads DSMQ.

This sequence belongs to the IPP transferase family. Monomer. Requires Mg(2+) as cofactor.

The enzyme catalyses adenosine(37) in tRNA + dimethylallyl diphosphate = N(6)-dimethylallyladenosine(37) in tRNA + diphosphate. Its function is as follows. Catalyzes the transfer of a dimethylallyl group onto the adenine at position 37 in tRNAs that read codons beginning with uridine, leading to the formation of N6-(dimethylallyl)adenosine (i(6)A). The sequence is that of tRNA dimethylallyltransferase from Thermoanaerobacter pseudethanolicus (strain ATCC 33223 / 39E) (Clostridium thermohydrosulfuricum).